We begin with the raw amino-acid sequence, 235 residues long: RNA pyrophosphohydrolase (235 aa).

Residues 6–149 form the Nudix hydrolase domain; it reads GFRPNVGIIL…KRGVYEMALT (144 aa). The short motif at 38–59 is the Nudix box element; sequence GGIDRGENPEQAMFRELHEEVG. The interval 184-235 is disordered; that stretch reads ANQSGEPGSFPAAGGIPSYATRPGAPFELPPGATFEPDPQTSFGVNAPTKKT.

It belongs to the Nudix hydrolase family. RppH subfamily. It depends on a divalent metal cation as a cofactor.

Accelerates the degradation of transcripts by removing pyrophosphate from the 5'-end of triphosphorylated RNA, leading to a more labile monophosphorylated state that can stimulate subsequent ribonuclease cleavage. The sequence is that of RNA pyrophosphohydrolase from Polaromonas naphthalenivorans (strain CJ2).